The following is a 113-amino-acid chain: N-alpha-acetyltransferase 38-A, NatC auxiliary subunit (113 aa).

The tract at residues 1–29 is disordered; sequence MAAVLEENGCSRQSSPSAGDSDAEPGDTA. A Sm domain is found at 28-106; that stretch reads TARHKLESLL…IVSIQVELES (79 aa).

Belongs to the snRNP Sm proteins family. As to quaternary structure, component of the N-terminal acetyltransferase C (NatC) complex, which is composed of naa35, naa38 and naa30.

It localises to the cytoplasm. Functionally, auxillary component of the N-terminal acetyltransferase C (NatC) complex which catalyzes acetylation of N-terminal methionine residues. The chain is N-alpha-acetyltransferase 38-A, NatC auxiliary subunit (naa38-a) from Xenopus laevis (African clawed frog).